Consider the following 293-residue polypeptide: MKTAWVFPGQGSQAVGMGVDLLSTAIAKEKYQQAEEILGWSVVEKCQGDEASLALTQNTQPCLYVIEAILADLLRDKGFQPDYVAGHSLGEYSALYAAGVFDFATGLQLVKQRSEVMASASGGMMAALMKFDQTQLQQALTDNTEVVLANDNSPEQVVISGTVAGVEAILANVKARRAVPLKVSGAFHSSFMAQPSQSFAQTLTACHFNDATVPVLSNVDPSPTQNGDRLKEKLIQQMTGSVRWRETMVNLGEIGATDYWEVGPGKVLTGLCKRTCPDLNLKNIGQLDDLNSL.

Active-site residues include serine 88 and histidine 188.

The protein belongs to the FabD family.

It carries out the reaction holo-[ACP] + malonyl-CoA = malonyl-[ACP] + CoA. The protein operates within lipid metabolism; fatty acid biosynthesis. The chain is Malonyl CoA-acyl carrier protein transacylase (fabD) from Synechocystis sp. (strain ATCC 27184 / PCC 6803 / Kazusa).